The chain runs to 284 residues: 2-dehydro-3-deoxyphosphooctonate aldolase (284 aa).

It belongs to the KdsA family.

The protein resides in the cytoplasm. The enzyme catalyses D-arabinose 5-phosphate + phosphoenolpyruvate + H2O = 3-deoxy-alpha-D-manno-2-octulosonate-8-phosphate + phosphate. It participates in carbohydrate biosynthesis; 3-deoxy-D-manno-octulosonate biosynthesis; 3-deoxy-D-manno-octulosonate from D-ribulose 5-phosphate: step 2/3. The protein operates within bacterial outer membrane biogenesis; lipopolysaccharide biosynthesis. The sequence is that of 2-dehydro-3-deoxyphosphooctonate aldolase from Photorhabdus laumondii subsp. laumondii (strain DSM 15139 / CIP 105565 / TT01) (Photorhabdus luminescens subsp. laumondii).